The following is a 739-amino-acid chain: Lysyl oxidase homolog 3A (739 aa).

An N-terminal signal peptide occupies residues 1 to 25; the sequence is MLRSELRDMVVAMVLWGILLPFCLS. 4 consecutive SRCR domains span residues 38-139, 166-272, 293-393, and 403-511; these read FRLA…VICK, LRPL…VSCV, MRLK…VICN, and MRLT…VICS. 12 disulfides stabilise this stretch: cysteine 64–cysteine 128, cysteine 77–cysteine 138, cysteine 108–cysteine 118, cysteine 196–cysteine 261, cysteine 209–cysteine 271, cysteine 238–cysteine 248, cysteine 318–cysteine 382, cysteine 331–cysteine 392, cysteine 362–cysteine 372, cysteine 433–cysteine 497, cysteine 446–cysteine 510, and cysteine 479–cysteine 489. Residue asparagine 256 is glycosylated (N-linked (GlcNAc...) asparagine). Asparagine 468 carries N-linked (GlcNAc...) asparagine glycosylation. A glycan (N-linked (GlcNAc...) asparagine) is linked at asparagine 611. The segment at residues 620–656 is a cross-link (lysine tyrosylquinone (Lys-Tyr)); it reads KASFCLEDTECHEGVSKRYECANFGEQGITVGCWDLY. Tyrosine 656 carries the 2',4',5'-topaquinone modification.

This sequence belongs to the lysyl oxidase family. Requires Cu cation as cofactor. Lysine tyrosylquinone residue serves as cofactor. Post-translationally, the lysine tyrosylquinone cross-link (LTQ) is generated by condensation of the epsilon-amino group of a lysine with a topaquinone produced by oxidation of tyrosine.

Its subcellular location is the secreted. The protein resides in the extracellular space. The protein localises to the cytoplasm. It localises to the nucleus. It carries out the reaction L-lysyl-[protein] + O2 + H2O = (S)-2-amino-6-oxohexanoyl-[protein] + H2O2 + NH4(+). The enzyme catalyses N(6)-acetyl-L-lysyl-[protein] + O2 + H2O = acetamide + (S)-2-amino-6-oxohexanoyl-[protein] + H2O2. Protein-lysine 6-oxidase that mediates the oxidation of peptidyl lysine residues to allysine in target proteins. Catalyzes the post-translational oxidative deamination of peptidyl lysine residues in precursors of elastin and different types of collagens, a prerequisite in the formation of cross-links between collagens and elastin. Can mediate oxidation of lysine residues that are acetylated. Also able to catalyze deacetylation of lysine residues. The protein is Lysyl oxidase homolog 3A of Danio rerio (Zebrafish).